A 152-amino-acid chain; its full sequence is Ferredoxin-thioredoxin reductase catalytic chain, chloroplastic (152 aa).

Residues 1 to 38 constitute a chloroplast transit peptide; that stretch reads MTSTVTTTVGCGGLPVRPLSTATRGRPRRCAVRAQAAG. C91 is a binding site for [4Fe-4S] cluster. C93 (nucleophile) is an active-site residue. C93 and C123 form a disulfide bridge. Residues C110, C112, and C121 each contribute to the [4Fe-4S] cluster site.

This sequence belongs to the ferredoxin thioredoxin reductase beta subunit family. In terms of assembly, heterodimer of subunit A (variable subunit) and subunit B (catalytic subunit). Heterodimeric FTR forms a complex with ferredoxin and thioredoxin. The cofactor is [4Fe-4S] cluster.

The protein localises to the plastid. It is found in the chloroplast. It catalyses the reaction [thioredoxin]-disulfide + 2 reduced [2Fe-2S]-[ferredoxin] + 2 H(+) = [thioredoxin]-dithiol + 2 oxidized [2Fe-2S]-[ferredoxin]. Its function is as follows. Catalytic subunit of the ferredoxin-thioredoxin reductase (FTR), which catalyzes the two-electron reduction of thioredoxins by the electrons provided by reduced ferredoxin. The chain is Ferredoxin-thioredoxin reductase catalytic chain, chloroplastic (FTRC) from Zea mays (Maize).